A 446-amino-acid polypeptide reads, in one-letter code: 3-phosphoshikimate 1-carboxyvinyltransferase (446 aa).

Positions 27, 28, and 32 each coordinate 3-phosphoshikimate. Lys-27 is a binding site for phosphoenolpyruvate. Phosphoenolpyruvate-binding residues include Gly-100 and Arg-128. Positions 177, 179, 330, and 357 each coordinate 3-phosphoshikimate. Gln-179 is a binding site for phosphoenolpyruvate. The Proton acceptor role is filled by Asp-330. Phosphoenolpyruvate-binding residues include Arg-361 and Arg-406.

This sequence belongs to the EPSP synthase family. Monomer.

The protein localises to the cytoplasm. The enzyme catalyses 3-phosphoshikimate + phosphoenolpyruvate = 5-O-(1-carboxyvinyl)-3-phosphoshikimate + phosphate. It functions in the pathway metabolic intermediate biosynthesis; chorismate biosynthesis; chorismate from D-erythrose 4-phosphate and phosphoenolpyruvate: step 6/7. In terms of biological role, catalyzes the transfer of the enolpyruvyl moiety of phosphoenolpyruvate (PEP) to the 5-hydroxyl of shikimate-3-phosphate (S3P) to produce enolpyruvyl shikimate-3-phosphate and inorganic phosphate. This chain is 3-phosphoshikimate 1-carboxyvinyltransferase, found in Sphingopyxis alaskensis (strain DSM 13593 / LMG 18877 / RB2256) (Sphingomonas alaskensis).